The chain runs to 166 residues: 3-isopropylmalate dehydratase small subunit (166 aa).

Belongs to the LeuD family. LeuD type 2 subfamily. As to quaternary structure, heterodimer of LeuC and LeuD.

The catalysed reaction is (2R,3S)-3-isopropylmalate = (2S)-2-isopropylmalate. It functions in the pathway amino-acid biosynthesis; L-leucine biosynthesis; L-leucine from 3-methyl-2-oxobutanoate: step 2/4. Its function is as follows. Catalyzes the isomerization between 2-isopropylmalate and 3-isopropylmalate, via the formation of 2-isopropylmaleate. This chain is 3-isopropylmalate dehydratase small subunit, found in Heliobacterium modesticaldum (strain ATCC 51547 / Ice1).